A 448-amino-acid chain; its full sequence is tRNA(Ile)-lysidine synthase (448 aa).

An ATP-binding site is contributed by 27-32; it reads SGGVDS.

This sequence belongs to the tRNA(Ile)-lysidine synthase family.

It is found in the cytoplasm. The enzyme catalyses cytidine(34) in tRNA(Ile2) + L-lysine + ATP = lysidine(34) in tRNA(Ile2) + AMP + diphosphate + H(+). Its function is as follows. Ligates lysine onto the cytidine present at position 34 of the AUA codon-specific tRNA(Ile) that contains the anticodon CAU, in an ATP-dependent manner. Cytidine is converted to lysidine, thus changing the amino acid specificity of the tRNA from methionine to isoleucine. This Vibrio campbellii (strain ATCC BAA-1116) protein is tRNA(Ile)-lysidine synthase.